The sequence spans 582 residues: Sodium-dependent low-affinity dicarboxylate transporter 1 (582 aa).

The next 12 membrane-spanning stretches (helical) occupy residues 17–37 (SFVI…VGDS), 59–79 (ALPL…FGIM), 87–107 (AYLP…LAVE), 130–150 (VMAG…NTAT), 224–244 (LMLS…TGTA), 271–291 (IFAF…LYLL), 317–337 (FSFA…LWIL), 353–373 (EFVS…TLPE), 401–421 (FPWS…GVKE), 455–475 (TNVC…AELA), 482–502 (PLNF…LPVA), and 527–547 (VTLG…GFVF).

Belongs to the SLC13A/DASS transporter (TC 2.A.47) family. NADC subfamily. In terms of tissue distribution, nad-1 and nad-2 are coexpressed in the intestinal tract from early larvae to adults, expression is from the pharynx through to the anus. Expression level is significantly greater in the anterior half of the intestine than in the posterior half.

It localises to the membrane. Functionally, low affinity sodium-dicarboxylate cotransporter that accepts a range of tricarboxylic acid-cycle intermediates with 4-5 carbon atoms. There is no interaction with monocarboxylates. The protein is Sodium-dependent low-affinity dicarboxylate transporter 1 (nac-1) of Caenorhabditis elegans.